The following is a 457-amino-acid chain: Multidrug resistance protein MdtK (457 aa).

Transmembrane regions (helical) follow at residues 11–31, 46–66, 93–113, 127–147, 160–180, 188–208, 243–263, 283–301, 316–336, 357–377, 387–407, and 418–438; these read LLAL…MGVV, AVAV…GLLL, WLAL…DHVI, AVGF…FQVL, GMVI…IFIY, LGGV…FLMM, LPVA…ALLV, LMFM…RVGF, YTSM…TIVF, LMLL…GSGV, IFFI…YLLG, and PAGF…LMVL.

It belongs to the multi antimicrobial extrusion (MATE) (TC 2.A.66.1) family. MdtK subfamily.

The protein resides in the cell inner membrane. In terms of biological role, multidrug efflux pump that functions probably as a Na(+)/drug antiporter. In Yersinia pseudotuberculosis serotype IB (strain PB1/+), this protein is Multidrug resistance protein MdtK.